The following is a 141-amino-acid chain: Large-conductance mechanosensitive channel (141 aa).

3 helical membrane-spanning segments follow: residues 8-28 (FALKGNVVDLAIGVIIGAAFG), 38-58 (IIMPFFGALGGLDFSNYFFPL), and 80-100 (GNFLTVAVNFLIIAFVLFLIV).

It belongs to the MscL family. In terms of assembly, homopentamer.

It localises to the cell inner membrane. Functionally, channel that opens in response to stretch forces in the membrane lipid bilayer. May participate in the regulation of osmotic pressure changes within the cell. The polypeptide is Large-conductance mechanosensitive channel (Beijerinckia indica subsp. indica (strain ATCC 9039 / DSM 1715 / NCIMB 8712)).